Reading from the N-terminus, the 226-residue chain is Transmembrane protein 204 (226 aa).

Topologically, residues 1-5 are cytoplasmic; sequence MTVQK. A helical membrane pass occupies residues 6–26; it reads LVATAVLVALVSLILNNAAAF. At 27–103 the chain is on the extracellular side; it reads TPNWVYQTLE…LQFDMMRACN (77 aa). The chain crosses the membrane as a helical span at residues 104–124; sequence LVATAALAVGQITFILGLTGL. Topologically, residues 125 to 136 are cytoplasmic; the sequence is PLMSPESQCWEE. A helical membrane pass occupies residues 137 to 157; the sequence is AMAAAFQLASFVLVIGLVTFY. Residues 158–170 lie on the Extracellular side of the membrane; that stretch reads RIGPYTNLSWSCY. Asn164 is a glycosylation site (N-linked (GlcNAc...) asparagine). The helical transmembrane segment at 171–191 threads the bilayer; that stretch reads LNIGACLLATLAAAMLIWNIL. The Cytoplasmic portion of the chain corresponds to 192–226; it reads HRREDCMAPRVIVISRSLTARFRRGLDNDYVESPC.

The protein localises to the cell junction. Its subcellular location is the adherens junction. The protein resides in the cell membrane. In terms of biological role, can influence paracellular permeability. Appears to be involved in cell-cell interactions through adherens. This Rattus norvegicus (Rat) protein is Transmembrane protein 204 (Tmem204).